The chain runs to 231 residues: Large ribosomal subunit protein uL1 (231 aa).

The protein belongs to the universal ribosomal protein uL1 family. Part of the 50S ribosomal subunit.

In terms of biological role, binds directly to 23S rRNA. The L1 stalk is quite mobile in the ribosome, and is involved in E site tRNA release. Functionally, protein L1 is also a translational repressor protein, it controls the translation of the L11 operon by binding to its mRNA. The polypeptide is Large ribosomal subunit protein uL1 (Mycoplasmopsis synoviae (strain 53) (Mycoplasma synoviae)).